Consider the following 919-residue polypeptide: Kinesin-like protein KIN-6 (919 aa).

The disordered stretch occupies residues 1–59 (MVRLSTKPPNPKVEMNLKEPPITGAGAGAAASPPAPSTLRRNPPRSARPPPTPLPNSKP). Over residues 28-45 (GAAASPPAPSTLRRNPPR) the composition is skewed to low complexity. Residues 46-56 (SARPPPTPLPN) show a composition bias toward pro residues. The Kinesin motor domain occupies 72 to 415 (RLKVFLRIRP…LRQASPYMKI (344 aa)). An ATP-binding site is contributed by 171–178 (GPTGSGKT). Disordered stretches follow at residues 591-615 (EEVS…TGTG), 674-700 (SESC…SFTD), 711-730 (SPQF…EEER), 737-764 (TTEG…EVNS), and 886-919 (KEEK…GRAQ). Basic and acidic residues predominate over residues 597–612 (STGHGPERSSDYDDKT). The span at 685–697 (HSSSSLDHPSDQS) shows a compositional bias: low complexity. The segment covering 755-764 (TPSCSQEVNS) has biased composition (polar residues). Residues 886–912 (KEEKVKSSRDAMGRSDKLIRLLTDHPP) show a composition bias toward basic and acidic residues.

This sequence belongs to the TRAFAC class myosin-kinesin ATPase superfamily. Kinesin family. KIN-6 subfamily.

The protein is Kinesin-like protein KIN-6 of Oryza sativa subsp. japonica (Rice).